The primary structure comprises 260 residues: 6-carboxyhexanoate--CoA ligase (260 aa).

Belongs to the BioW family. As to quaternary structure, homodimer. It depends on Mg(2+) as a cofactor.

The catalysed reaction is heptanedioate + ATP + CoA = 6-carboxyhexanoyl-CoA + AMP + diphosphate. It functions in the pathway metabolic intermediate metabolism; pimeloyl-CoA biosynthesis; pimeloyl-CoA from pimelate: step 1/1. Functionally, catalyzes the transformation of pimelate into pimeloyl-CoA with concomitant hydrolysis of ATP to AMP. This Fibrobacter succinogenes (strain ATCC 19169 / S85) protein is 6-carboxyhexanoate--CoA ligase.